The following is a 299-amino-acid chain: GTP cyclohydrolase FolE2 (299 aa).

It belongs to the GTP cyclohydrolase IV family.

The catalysed reaction is GTP + H2O = 7,8-dihydroneopterin 3'-triphosphate + formate + H(+). It functions in the pathway cofactor biosynthesis; 7,8-dihydroneopterin triphosphate biosynthesis; 7,8-dihydroneopterin triphosphate from GTP: step 1/1. Its function is as follows. Converts GTP to 7,8-dihydroneopterin triphosphate. This is GTP cyclohydrolase FolE2 from Citrobacter koseri (strain ATCC BAA-895 / CDC 4225-83 / SGSC4696).